The sequence spans 147 residues: Hemoglobin subunit epsilon (147 aa).

In terms of domain architecture, Globin spans 3–147 (HFTAEEKAAV…VAIALAHKYH (145 aa)). Serine 14 and serine 51 each carry phosphoserine. The heme b site is built by histidine 64 and histidine 93.

Belongs to the globin family. As to quaternary structure, heterotetramer of two alpha chains and two epsilon chains in early embryonic hemoglobin Gower-2; two zeta chains and two epsilon chains in early embryonic hemoglobin Gower-1. As to expression, red blood cells.

In terms of biological role, the epsilon chain is a beta-type chain of early mammalian embryonic hemoglobin. This is Hemoglobin subunit epsilon (HBE1) from Pan troglodytes (Chimpanzee).